We begin with the raw amino-acid sequence, 311 residues long: Olfactory receptor 1073 (311 aa).

Residues 1–25 (MKQQNDTQILQFLLLGLSENTELQP) lie on the Extracellular side of the membrane. The N-linked (GlcNAc...) asparagine glycan is linked to N5. Residues 26-46 (LIYWLFFSMYLVTVWGNLIII) form a helical membrane-spanning segment. The Cytoplasmic segment spans residues 47-57 (LATVLDFRLHT). Residues 58–78 (AMYFFLCNLSFVDICLISTTI) form a helical membrane-spanning segment. At 79–97 (PKMLANVHLNHKAITYEGC) the chain is on the extracellular side. A disulfide bridge connects residues C97 and C179. A helical membrane pass occupies residues 98-118 (IMQIYFFTLFVGLDNFLLAVM). Topologically, residues 119 to 133 (AYDRFVAICHPLRYT) are cytoplasmic. Residues 134-154 (SIMTPHLCMSLVLVSWIASVL) form a helical membrane-spanning segment. An N-linked (GlcNAc...) asparagine glycan is attached at N155. The Extracellular segment spans residues 155 to 196 (NSSLQSFLVLQLSFCTEVEIPHFFCELSMLVHLACSDTFLSD). A helical transmembrane segment spans residues 197–217 (MAMNVLAALLGGGCLVGILYS). The Cytoplasmic segment spans residues 218–244 (YSKIVSSIQAISSAEGKYKAFSTCVSH). The helical transmembrane segment at 245–265 (LSVVSLFYCTLLGVYLSSAVT) threads the bilayer. Residues 266–271 (QNSHST) are Extracellular-facing. A helical membrane pass occupies residues 272 to 292 (AATSLMYTVVTPMLNPFIYSL). Topologically, residues 293 to 311 (RNDNIKRALKNFVKKKLEK) are cytoplasmic.

This sequence belongs to the G-protein coupled receptor 1 family. Tongue specific.

Its subcellular location is the cell membrane. Functionally, possible taste receptor. The polypeptide is Olfactory receptor 1073 (Olr1073) (Rattus norvegicus (Rat)).